The primary structure comprises 441 residues: Histidinol dehydrogenase (441 aa).

Residues Thr-240, Gln-262, and His-265 each contribute to the substrate site. Residues Gln-262 and His-265 each coordinate Zn(2+). Residues Glu-332 and His-333 each act as proton acceptor in the active site. Residues His-333, Asp-366, Glu-420, and His-425 each contribute to the substrate site. Asp-366 is a Zn(2+) binding site. His-425 is a Zn(2+) binding site.

This sequence belongs to the histidinol dehydrogenase family. Zn(2+) serves as cofactor.

The enzyme catalyses L-histidinol + 2 NAD(+) + H2O = L-histidine + 2 NADH + 3 H(+). It participates in amino-acid biosynthesis; L-histidine biosynthesis; L-histidine from 5-phospho-alpha-D-ribose 1-diphosphate: step 9/9. Its function is as follows. Catalyzes the sequential NAD-dependent oxidations of L-histidinol to L-histidinaldehyde and then to L-histidine. This is Histidinol dehydrogenase from Streptomyces avermitilis (strain ATCC 31267 / DSM 46492 / JCM 5070 / NBRC 14893 / NCIMB 12804 / NRRL 8165 / MA-4680).